Consider the following 660-residue polypeptide: Oligopeptide-binding protein AliA (660 aa).

An N-terminal signal peptide occupies residues 1-22 (MKSSKLFALAGVTLLAATTLAA). A lipid anchor (N-palmitoyl cysteine) is attached at C23. C23 is lipidated: S-diacylglycerol cysteine. Residues 638-660 (EKWMKEKEESNKKAQEDLAKHVK) are disordered.

This sequence belongs to the bacterial solute-binding protein 5 family.

It localises to the cell membrane. Its function is as follows. Part of the binding-protein-dependent transport system for oligopeptides; probably an oligopeptide binding protein. The sequence is that of Oligopeptide-binding protein AliA (aliA) from Streptococcus pneumoniae serotype 4 (strain ATCC BAA-334 / TIGR4).